A 1038-amino-acid polypeptide reads, in one-letter code: Eukaryotic translation initiation factor 3 subunit A (1038 aa).

Residues 92-121 (LKKFIELAEKKVTEAQAKADEIQSSLESAA) are a coiled coil. Positions 339 to 523 (MTKAVSFVLL…GVLTFDTDVF (185 aa)) constitute a PCI domain. Residues 611-899 (IDKKKEAATD…QKQREEEAEA (289 aa)) adopt a coiled-coil conformation. Basic and acidic residues-rich tracts occupy residues 621–632 (ALQRKQREEETR) and 800–901 (RHEE…EARR). Disordered regions lie at residues 621 to 641 (ALQRKQREEETRKRIRTQQLQ) and 800 to 1038 (RHEE…QQGQ). 2 stretches are compositionally biased toward low complexity: residues 943-952 (KEAAGGAAPE) and 976-993 (GASAAAPAAPPSNGAAPS). Over residues 1002 to 1019 (DSGSSTPPSRTQTPATTS) the composition is skewed to polar residues.

It belongs to the eIF-3 subunit A family. Component of the eukaryotic translation initiation factor 3 (eIF-3) complex.

Its subcellular location is the cytoplasm. Its function is as follows. RNA-binding component of the eukaryotic translation initiation factor 3 (eIF-3) complex, which is involved in protein synthesis of a specialized repertoire of mRNAs and, together with other initiation factors, stimulates binding of mRNA and methionyl-tRNAi to the 40S ribosome. The eIF-3 complex specifically targets and initiates translation of a subset of mRNAs involved in cell proliferation. In Aspergillus oryzae (strain ATCC 42149 / RIB 40) (Yellow koji mold), this protein is Eukaryotic translation initiation factor 3 subunit A (tif32).